We begin with the raw amino-acid sequence, 329 residues long: MKITVIGAGSWGTALALHFSQHGNRVSLWTRNADQVRQMQEARENKRGLPGFSFPETLEVCADLAEALKDSGLVLIVTSVAGLRSSAELLKQYGAGHLPVLAACKGFEQDTGLLTFQVLKEVLPDNKKIGVLSGPSFAQELAKQLPCAVVLASENQEWIEELVPQLNTTVMRLYGSTDVIGVAVGGSVKNVMAIATGLSDGLEYGLNARAALVTRGLAEITRLASAMGAQPKTMMGLAGIGDLILTCTGALSRNRRVGLGLAEGKELHQVLVEIGHVSEGVSTIEEVFNTACKYQIDMPITQTLLQLIRKEMTPQQVVERLMERSARFE.

Residues S10, W11, R31, and K105 each contribute to the NADPH site. K105, G134, and S136 together coordinate sn-glycerol 3-phosphate. A138 is a binding site for NADPH. Residues K189, D242, S252, R253, and N254 each contribute to the sn-glycerol 3-phosphate site. K189 functions as the Proton acceptor in the catalytic mechanism. R253 contacts NADPH. 2 residues coordinate NADPH: V277 and E279.

The protein belongs to the NAD-dependent glycerol-3-phosphate dehydrogenase family.

The protein localises to the cytoplasm. It catalyses the reaction sn-glycerol 3-phosphate + NAD(+) = dihydroxyacetone phosphate + NADH + H(+). The catalysed reaction is sn-glycerol 3-phosphate + NADP(+) = dihydroxyacetone phosphate + NADPH + H(+). The protein operates within membrane lipid metabolism; glycerophospholipid metabolism. Its function is as follows. Catalyzes the reduction of the glycolytic intermediate dihydroxyacetone phosphate (DHAP) to sn-glycerol 3-phosphate (G3P), the key precursor for phospholipid synthesis. The polypeptide is Glycerol-3-phosphate dehydrogenase [NAD(P)+] (Neisseria gonorrhoeae (strain ATCC 700825 / FA 1090)).